The following is a 284-amino-acid chain: L-ribulose-5-phosphate 3-epimerase UlaE (284 aa).

This sequence belongs to the L-ribulose-5-phosphate 3-epimerase family.

The enzyme catalyses L-ribulose 5-phosphate = L-xylulose 5-phosphate. It functions in the pathway cofactor degradation; L-ascorbate degradation; D-xylulose 5-phosphate from L-ascorbate: step 3/4. In terms of biological role, catalyzes the isomerization of L-xylulose-5-phosphate to L-ribulose-5-phosphate. Is involved in the anaerobic L-ascorbate utilization. The chain is L-ribulose-5-phosphate 3-epimerase UlaE from Salmonella heidelberg (strain SL476).